The following is a 536-amino-acid chain: T-complex protein 1 subunit delta (536 aa).

Positions 1 to 15 (MPEGKATSSASNTGK) are enriched in polar residues. The segment at 1–26 (MPEGKATSSASNTGKNKGGAYQDRDK) is disordered. Residue Gly-50 participates in ADP binding. Position 50 (Gly-50) interacts with ATP. Mg(2+) is bound at residue Asp-101. Gly-102, Thr-103, Thr-104, Ser-105, Ser-170, Lys-171, Gly-422, and Gln-507 together coordinate ADP. Residues Gly-102 and Thr-103 each contribute to the ATP site. Residue Lys-171 coordinates ATP.

This sequence belongs to the TCP-1 chaperonin family. Component of the chaperonin-containing T-complex (TRiC), a hexadecamer composed of two identical back-to-back stacked rings enclosing a protein folding chamber. Each ring is made up of eight different subunits: TCP1/CCT1, CCT2, CCT3, CCT4, CCT5, CCT6A/CCT6, CCT7, CCT8.

The protein localises to the cytoplasm. The catalysed reaction is ATP + H2O = ADP + phosphate + H(+). Functionally, component of the chaperonin-containing T-complex (TRiC), a molecular chaperone complex that assists the folding of actin, tubulin and other proteins upon ATP hydrolysis. The protein is T-complex protein 1 subunit delta (cct4) of Takifugu rubripes (Japanese pufferfish).